We begin with the raw amino-acid sequence, 64 residues long: Phylloxin-B1 (64 aa).

Positions 1–22 (MVFLKKSLLLVLFVGLVSLSIC) are cleaved as a signal peptide. Positions 23 to 42 (EENKREEHEEIEENKEKAEE) are excised as a propeptide. Gln63 carries the post-translational modification Glutamine amide.

Expressed by the skin glands.

The protein resides in the secreted. Its function is as follows. Antimicrobial peptide against the wall-less bacteria A.laidlawii and S.melliferum, the Gram-positive bacteria B.megaterium KM, C.glutamicum ATCC 27853 and M.luteus ATCC 27853 and the Gram-negative-bacteria R.meliloti 102F34 and E.coli K12. This Phyllomedusa bicolor (Two-colored leaf frog) protein is Phylloxin-B1.